The following is an 82-amino-acid chain: DNA gyrase inhibitor YacG (82 aa).

Zn(2+)-binding residues include Cys9, Cys12, Cys27, and Cys31. The segment at Ile44 to Glu82 is disordered. Residues Arg72–Glu82 are compositionally biased toward basic and acidic residues.

Belongs to the DNA gyrase inhibitor YacG family. As to quaternary structure, interacts with GyrB. It depends on Zn(2+) as a cofactor.

Inhibits all the catalytic activities of DNA gyrase by preventing its interaction with DNA. Acts by binding directly to the C-terminal domain of GyrB, which probably disrupts DNA binding by the gyrase. This chain is DNA gyrase inhibitor YacG, found in Rhodopirellula baltica (strain DSM 10527 / NCIMB 13988 / SH1).